The sequence spans 301 residues: Zinc finger protein LEE1 (301 aa).

Residues 1–25 form a disordered region; that stretch reads MDAFENMSVSNHPGGNARRNSQSAN. Over residues 7–25 the composition is skewed to polar residues; it reads MSVSNHPGGNARRNSQSAN. Phosphoserine occurs at positions 21 and 30. C3H1-type zinc fingers lie at residues 87–114 and 123–145; these read DYSH…HSPD and PCKY…HVLP. S282 is modified (phosphoserine).

The polypeptide is Zinc finger protein LEE1 (LEE1) (Saccharomyces cerevisiae (strain ATCC 204508 / S288c) (Baker's yeast)).